Consider the following 52-residue polypeptide: Large ribosomal subunit protein bL33 (52 aa).

This sequence belongs to the bacterial ribosomal protein bL33 family.

This chain is Large ribosomal subunit protein bL33 (rpmG), found in Chlamydia pneumoniae (Chlamydophila pneumoniae).